Reading from the N-terminus, the 685-residue chain is MFRSSEPVSPLDDVVTKATDENLTTENWQYILDVCDEVNNDPENGAKNVITSVTKRLNKKFANTQLYALTLVISLSSNCGSKMQQAIASKAFVKTLMKLANDSAVHKSVKSKVLEVLEQLTDEYKKDPSLRLIEEAYDELSRKKPDLKAPAKPEKHKITEQERQREEEELQMVLALSLSETNTSGSFQQHHQTNSQIQPPVNNSHFATDPHQQQQQQQQQHNQQDYGQQSNNANTNNNAPAVEDPTPTVATVSRVKALYDLNATEPGELSFRKGDIITVLESVFRDWWRGSLRGQVGIFPLNYVMPIAEPTPAEIEKEAQEELSVFSQSRNIEKLLALLSSQDAARLNLAENEELQSLYHSTLAIRPKLVKLIDKYAQRKDDLVELNEKFVKARRVYDDLMEASMPQYGGAAAAGGYAGGAQGGAPAGYPSAQGAPAGYPGTSGTPGTPGYPPQYPPQQQQQQQQQQQQQPPYPVQPLQTHQQQPQQQQQQTPYPVHQYDNTQAHGRQGSTDSGRSQRMYSQGGQGGQGPTDLHPATTGGSGYGFPPQYGGGAPSAPSAPHGGAGGPGGPGGPSAPSGAHSGAPSAPPSHAPAASAPHGYGSPSTAHSAPYGTSPAASAPARHSPYINGTPTSNLGQQSPVTSQSIPIPNNNNLAAPPVQGLYSHGTSPPPPVPNAGPPPSNFYE.

One can recognise a VHS domain in the interval 18–148 (ATDENLTTEN…ELSRKKPDLK (131 aa)). The segment covering 144-166 (KPDLKAPAKPEKHKITEQERQRE) has biased composition (basic and acidic residues). Disordered regions lie at residues 144–168 (KPDL…REEE) and 182–247 (NTSG…DPTP). In terms of domain architecture, UIM spans 165–184 (REEEELQMVLALSLSETNTS). A compositionally biased stretch (polar residues) spans 182 to 206 (NTSGSFQQHHQTNSQIQPPVNNSHF). Low complexity predominate over residues 212-241 (QQQQQQQQQHNQQDYGQQSNNANTNNNAPA). The 60-residue stretch at 250-309 (ATVSRVKALYDLNATEPGELSFRKGDIITVLESVFRDWWRGSLRGQVGIFPLNYVMPIAE) folds into the SH3 domain. Low complexity-rich tracts occupy residues 432-448 (AQGA…TPGT) and 457-498 (PQQQ…PVHQ). The tract at residues 432-685 (AQGAPAGYPG…AGPPPSNFYE (254 aa)) is disordered. A compositionally biased stretch (polar residues) spans 499-522 (YDNTQAHGRQGSTDSGRSQRMYSQ). Gly residues-rich tracts occupy residues 539–553 (GGSG…GGGA) and 562–572 (GGAGGPGGPGG). Low complexity-rich tracts occupy residues 574 to 584 (SAPSGAHSGAP) and 591 to 604 (APAA…GSPS). Residues 627–645 (INGTPTSNLGQQSPVTSQS) show a composition bias toward polar residues. The span at 646–658 (IPIPNNNNLAAPP) shows a compositional bias: low complexity. Positions 668–685 (SPPPPVPNAGPPPSNFYE) are enriched in pro residues.

Belongs to the STAM family. Component of the ESCRT-0 complex composed of HSE1 and VPS27.

Its subcellular location is the endosome membrane. Component of the ESCRT-0 complex which is the sorting receptor for ubiquitinated cargo proteins at the multivesicular body (MVB). The chain is Class E vacuolar protein-sorting machinery protein HSE1 (HSE1) from Yarrowia lipolytica (strain CLIB 122 / E 150) (Yeast).